We begin with the raw amino-acid sequence, 247 residues long: UDP-N-acetyl-D-mannosaminuronic acid transferase (247 aa).

It belongs to the glycosyltransferase 26 family.

The catalysed reaction is UDP-N-acetyl-alpha-D-mannosaminouronate + N-acetyl-alpha-D-glucosaminyl-di-trans,octa-cis-undecaprenyl diphosphate = beta-D-ManNAcA-(1-&gt;4)-alpha-D-GlcNAc-di-trans,octa-cis-undecaprenyl diphosphate + UDP + H(+). It participates in bacterial outer membrane biogenesis; enterobacterial common antigen biosynthesis. Functionally, catalyzes the synthesis of Und-PP-GlcNAc-ManNAcA (Lipid II), the second lipid-linked intermediate involved in enterobacterial common antigen (ECA) synthesis. The polypeptide is UDP-N-acetyl-D-mannosaminuronic acid transferase (Enterobacter sp. (strain 638)).